The following is a 254-amino-acid chain: Glycerol operon regulatory protein (254 aa).

One can recognise an HTH iclR-type domain in the interval 5–67 (IQSLERAAAM…PASGRYQLGA (63 aa)). Positions 27–46 (LSDIASTLGLAKGTAHGILR) form a DNA-binding region, H-T-H motif. The region spanning 82–251 (LRARALVWTD…AAAVSRDLGA (170 aa)) is the IclR-ED domain.

Its function is as follows. May be an activator protein for the gylABX operon. The protein is Glycerol operon regulatory protein (gylR) of Streptomyces griseus.